Reading from the N-terminus, the 323-residue chain is uncharacterized protein (323 aa).

This sequence belongs to the glycosyltransferase 2 family.

This is an uncharacterized protein from Haemophilus influenzae (strain ATCC 51907 / DSM 11121 / KW20 / Rd).